Consider the following 237-residue polypeptide: Uridylate kinase (237 aa).

Residue 12 to 15 coordinates ATP; that stretch reads KISG. Glycine 54 lines the UMP pocket. ATP-binding residues include glycine 55 and arginine 59. UMP is bound by residues aspartate 72 and 133 to 140; that span reads TGNPFFST. The ATP site is built by tyrosine 166 and aspartate 169.

This sequence belongs to the UMP kinase family. Homohexamer.

It is found in the cytoplasm. The enzyme catalyses UMP + ATP = UDP + ADP. The protein operates within pyrimidine metabolism; CTP biosynthesis via de novo pathway; UDP from UMP (UMPK route): step 1/1. Inhibited by UTP. Functionally, catalyzes the reversible phosphorylation of UMP to UDP. In Caldanaerobacter subterraneus subsp. tengcongensis (strain DSM 15242 / JCM 11007 / NBRC 100824 / MB4) (Thermoanaerobacter tengcongensis), this protein is Uridylate kinase.